The chain runs to 217 residues: Homologous-pairing protein 2 homolog (217 aa).

Residues 89-117 (LDASIMALTAKVQGLQQSCRHMEAELKEL) are interaction with NR3C1, homodimerization and transcriptional activation almost abolished when missing. The stretch at 93-153 (IMALTAKVQG…LKNIKAATNH (61 aa)) forms a coiled coil. Positions 118-182 (TSALTTPEMQ…WRKRKRMTTE (65 aa)) are DNA-binding. Positions 118 to 182 (TSALTTPEMQ…WRKRKRMTTE (65 aa)) are interaction with NR3C1 decreased when missing.

Belongs to the HOP2 family. Forms a stable heterodimer with MND1. Interacts with PSMC3/TBP1. Interacts with the DNA-binding domain of the nuclear receptors NR3C1/GR, ESR2/ER-beta, THRB and RXRA. Phosphorylated by PKA, PKC and MAPK.

The protein localises to the nucleus. Its function is as follows. Plays an important role in meiotic recombination. Stimulates DMC1-mediated strand exchange required for pairing homologous chromosomes during meiosis. The complex PSMC3IP/MND1 binds DNA, stimulates the recombinase activity of DMC1 as well as DMC1 D-loop formation from double-strand DNA. This complex stabilizes presynaptic RAD51 and DMC1 filaments formed on single strand DNA to capture double-strand DNA. This complex stimulates both synaptic and presynaptic critical steps in RAD51 and DMC1-promoted homologous pairing. May inhibit HIV-1 viral protein TAT activity and modulate the activity of proteasomes through association with PSMC3. Plays a role as a coactivator in nuclear receptor-mediated transcription. This is Homologous-pairing protein 2 homolog (Psmc3ip) from Rattus norvegicus (Rat).